Reading from the N-terminus, the 620-residue chain is Estrogen receptor (620 aa).

Polar residues-rich tracts occupy residues 1 to 10 (MSKRQSSVQI) and 101 to 111 (GSLQSLGSGPT). Disordered stretches follow at residues 1-55 (MSKR…RGSG) and 88-111 (YSAPLETNGPPSEGSLQSLGSGPT). The modulating stretch occupies residues 1 to 185 (MSKRQSSVQI…GFEMAKDTRF (185 aa)). 2 NR C4-type zinc fingers span residues 186–206 (CAVCSDYASGYHYGVWSCEGC) and 222–246 (CPATNQCTIDRNRRKSCQACRLRKC). Residues 186 to 251 (CAVCSDYASG…RLRKCYEVGM (66 aa)) constitute a DNA-binding region (nuclear receptor). A hinge region spans residues 252 to 314 (MKGGVRKDRI…GGGRLSVTSI (63 aa)). The tract at residues 286–308 (KTVHYDGRKRSSTGGGGGGGGGR) is disordered. A compositionally biased stretch (gly residues) spans 298–308 (TGGGGGGGGGR). The NR LBD domain occupies 315–551 (PPEQVLLLLQ…DLLLEMLDAH (237 aa)). The disordered stretch occupies residues 558–620 (RAPQSLSQVD…RPDCTPALQD (63 aa)).

The protein belongs to the nuclear hormone receptor family. NR3 subfamily. As to quaternary structure, binds DNA as a homodimer. Can form a heterodimer with ER-beta. As to expression, widely expressed in brain, ovary, testis, and female liver.

The protein resides in the nucleus. In terms of biological role, the steroid hormones and their receptors are involved in the regulation of eukaryotic gene expression and affect cellular proliferation and differentiation in target tissues. The polypeptide is Estrogen receptor (esr1) (Oryzias latipes (Japanese rice fish)).